A 344-amino-acid chain; its full sequence is Putative esterase NocK (344 aa).

The tat-type signal signal peptide spans 1–34 (MIGVTRRSGLALAVLVSSAACAGAEPVAPPPAPA). A disordered region spans residues 265 to 295 (GGADERRREEARPAAAPGGTSTSRETCANPD). Residues 266-276 (GADERRREEAR) show a composition bias toward basic and acidic residues.

Belongs to the AB hydrolase superfamily. Predicted to be exported by the Tat system. The position of the signal peptide cleavage has not been experimentally proven.

The chain is Putative esterase NocK from Nocardia uniformis subsp. tsuyamanensis.